The following is a 487-amino-acid chain: Serine/threonine-protein kinase 4 (487 aa).

Residue M1 is modified to N-acetylmethionine. T3 carries the post-translational modification Phosphothreonine. Residues 30 to 281 enclose the Protein kinase domain; the sequence is FDVLEKLGEG…ATQLLQHPFV (252 aa). ATP contacts are provided by residues 36 to 44 and K59; that span reads LGEGSYGSV. The Proton acceptor role is filled by D149. Phosphothreonine; by autocatalysis is present on T183. The residue at position 265 (S265) is a Phosphoserine. A coiled-coil region spans residues 289 to 311; sequence ILRDLINEAMDVKLKRQEAQQRE. The interval 305 to 334 is disordered; it reads QEAQQREVDQDDEENSEEDEMDSGTMVRAA. A compositionally biased stretch (acidic residues) spans 313-326; it reads DQDDEENSEEDEMD. S320 is subject to Phosphoserine. Phosphothreonine occurs at positions 340 and 367. T387 is subject to Phosphothreonine; by PKB/AKT1. S410 carries the post-translational modification Phosphoserine. The residue at position 433 (Y433) is a Phosphotyrosine. The region spanning 433 to 480 is the SARAH domain; it reads YEFLKSWTVEDLQKRLLALDPMMEQEMEEIRQKYRSKRQPILDAIEAK.

This sequence belongs to the protein kinase superfamily. STE Ser/Thr protein kinase family. STE20 subfamily. Homodimer; mediated via the coiled-coil region. Interacts with NORE1, which inhibits autoactivation. Interacts with and stabilizes SAV1. Interacts with RASSF1. Interacts with FOXO3. Interacts with RASSF2 (via SARAH domain). Interacts with AR, PKB/AKT1, TNNI3 and SIRT1. Interacts with MARK3 and SCRIB in the presence of DLG5. Interacts with DLG5 (via PDZ domain 3). The cofactor is Mg(2+). In terms of processing, autophosphorylated on serine and threonine residues. Phosphorylation at Thr-387 by PKB/AKT1, leads to inhibition of its: kinase activity, nuclear translocation and autophosphorylation at Thr-183. It also diminishes its cleavage by caspases and its ability to phosphorylate FOXO3. Post-translationally, proteolytically cleaved by caspase-3 during apoptosis at Asp-326 resulting in a 37 kDa form. Proteolytic cleavage results in kinase activation and nuclear translocation of the truncated form (MST1/N).

Its subcellular location is the cytoplasm. It localises to the nucleus. It catalyses the reaction L-seryl-[protein] + ATP = O-phospho-L-seryl-[protein] + ADP + H(+). It carries out the reaction L-threonyl-[protein] + ATP = O-phospho-L-threonyl-[protein] + ADP + H(+). With respect to regulation, inhibited by the C-terminal non-catalytic region. Activated by caspase-cleavage. Full activation also requires homodimerization and autophosphorylation of Thr-183. Activated by RASSF1 which acts by preventing its dephosphorylation. Functionally, stress-activated, pro-apoptotic kinase which, following caspase-cleavage, enters the nucleus and induces chromatin condensation followed by internucleosomal DNA fragmentation. Key component of the Hippo signaling pathway which plays a pivotal role in organ size control and tumor suppression by restricting proliferation and promoting apoptosis. The core of this pathway is composed of a kinase cascade wherein STK3/MST2 and STK4/MST1, in complex with its regulatory protein SAV1, phosphorylates and activates LATS1/2 in complex with its regulatory protein MOB1, which in turn phosphorylates and inactivates YAP1 oncoprotein and WWTR1/TAZ. Phosphorylation of YAP1 by LATS2 inhibits its translocation into the nucleus to regulate cellular genes important for cell proliferation, cell death, and cell migration. STK3/MST2 and STK4/MST1 are required to repress proliferation of mature hepatocytes, to prevent activation of facultative adult liver stem cells (oval cells), and to inhibit tumor formation. Phosphorylates 'Ser-14' of histone H2B (H2BS14ph) during apoptosis. Phosphorylates FOXO3 upon oxidative stress, which results in its nuclear translocation and cell death initiation. Phosphorylates MOBKL1A, MOBKL1B and RASSF2. Phosphorylates TNNI3 (cardiac Tn-I) and alters its binding affinity to TNNC1 (cardiac Tn-C) and TNNT2 (cardiac Tn-T). Phosphorylates FOXO1 on 'Ser-212' and regulates its activation and stimulates transcription of PMAIP1 in a FOXO1-dependent manner. Phosphorylates SIRT1 and inhibits SIRT1-mediated p53/TP53 deacetylation, thereby promoting p53/TP53 dependent transcription and apoptosis upon DNA damage. Acts as an inhibitor of PKB/AKT1. Phosphorylates AR on 'Ser-650' and suppresses its activity by intersecting with PKB/AKT1 signaling and antagonizing formation of AR-chromatin complexes. This Mus musculus (Mouse) protein is Serine/threonine-protein kinase 4 (Stk4).